Reading from the N-terminus, the 303-residue chain is Carboxypeptidase B (303 aa).

Positions 5 to 298 (SYHDYDEINA…EGVKVVANFV (294 aa)) constitute a Peptidase M14 domain. 2 residues coordinate Zn(2+): histidine 63 and glutamate 66. Residues 63–66 (HARE), arginine 118, and 136–137 (NR) each bind substrate. Histidine 189 serves as a coordination point for Zn(2+). Substrate contacts are provided by residues 190-191 (SY) and tyrosine 241. Catalysis depends on glutamate 264, which acts as the Proton donor/acceptor.

Belongs to the peptidase M14 family. It depends on Zn(2+) as a cofactor.

It is found in the secreted. The catalysed reaction is Preferential release of a C-terminal lysine or arginine amino acid.. In Astacus astacus (Noble crayfish), this protein is Carboxypeptidase B.